A 529-amino-acid polypeptide reads, in one-letter code: Na(+)/H(+) antiporter NhaB (529 aa).

A run of 12 helical transmembrane segments spans residues 13 to 33, 34 to 54, 90 to 110, 113 to 133, 149 to 166, 205 to 225, 241 to 261, 306 to 326, 327 to 347, 351 to 371, 451 to 471, and 479 to 499; these read FLGK…IINP, IVFF…EFIF, LVAN…IYFM, LLLF…ILSL, LTVI…YSIY, LLMH…VGEP, FLIR…LTCF, GLIA…VGLI, GLSV…HSLG, EEAL…AVII, ATPN…APLI, and VIMA…GIVF.

It belongs to the NhaB Na(+)/H(+) (TC 2.A.34) antiporter family.

It is found in the cell inner membrane. The catalysed reaction is 2 Na(+)(in) + 3 H(+)(out) = 2 Na(+)(out) + 3 H(+)(in). In terms of biological role, na(+)/H(+) antiporter that extrudes sodium in exchange for external protons. This is Na(+)/H(+) antiporter NhaB from Vibrio vulnificus (strain YJ016).